Here is a 71-residue protein sequence, read N- to C-terminus: MSQYSQNQSSGAYPTPPVSTGPYVAPPPLGYPTNDTSHATVATVETKSKGDGFLKGCLAAMCCCCVLDACF.

Polar residues predominate over residues 1 to 12 (MSQYSQNQSSGA). Residues 1–36 (MSQYSQNQSSGAYPTPPVSTGPYVAPPPLGYPTNDT) are disordered. The segment covering 14–30 (PTPPVSTGPYVAPPPLG) has biased composition (pro residues). A helical membrane pass occupies residues 48-64 (SKGDGFLKGCLAAMCCC).

This sequence belongs to the CYSTM1 family. In terms of assembly, homodimer and heterodimers. Interacts with CYSTM7 and WIH1/CYSTM13. Mostly expressed in roots, stems, rosette leaves and siliques and, to a lower extent, in flowers and cauline leaves.

Its subcellular location is the cell membrane. It localises to the cytoplasm. Involved in resistance to abiotic stress. In Arabidopsis thaliana (Mouse-ear cress), this protein is Protein CYSTEINE-RICH TRANSMEMBRANE MODULE 6.